A 260-amino-acid polypeptide reads, in one-letter code: Thrombin-like enzyme 2 (260 aa).

The first 18 residues, 1–18, serve as a signal peptide directing secretion; it reads MMLIRVLANLLILQLSYA. Positions 19 to 24 are excised as a propeptide; that stretch reads QKSSEL. Residues 25–251 form the Peptidase S1 domain; sequence VIGGDECNIN…HLDWIQSIIA (227 aa). Disulfide bonds link C31–C165, C52–C68, C102–C258, C144–C212, C176–C191, and C202–C227. H67 (charge relay system) is an active-site residue. A glycan (N-linked (GlcNAc...) asparagine) is linked at N105. D112 acts as the Charge relay system in catalysis. N-linked (GlcNAc...) asparagine glycosylation is found at N156 and N172. The active-site Charge relay system is the S206. N253 carries N-linked (GlcNAc...) asparagine glycosylation.

This sequence belongs to the peptidase S1 family. Snake venom subfamily. In terms of assembly, monomer. As to expression, expressed by the venom gland.

The protein localises to the secreted. Functionally, thrombin-like snake venom serine protease. The protein is Thrombin-like enzyme 2 of Trimeresurus albolabris (White-lipped pit viper).